The sequence spans 41 residues: Photosystem I reaction center subunit VIII (41 aa).

A helical transmembrane segment spans residues 12–32; the sequence is WIMIPVTCWLFPVVVMGLLFI.

Belongs to the PsaI family.

The protein resides in the cellular thylakoid membrane. Its function is as follows. May help in the organization of the PsaL subunit. The polypeptide is Photosystem I reaction center subunit VIII (Cyanothece sp. (strain PCC 7425 / ATCC 29141)).